The primary structure comprises 260 residues: HTH-type transcriptional repressor NanR (260 aa).

The 69-residue stretch at 27–95 folds into the HTH gntR-type domain; sequence KKLSEMVEEE…NGERARVSRP (69 aa). A DNA-binding region (H-T-H motif) is located at residues 55–74; that stretch reads ERELMAFFNVGRPSVREALA.

The protein belongs to the NanR family.

Its function is as follows. Transcriptional repressor that controls expression of the genes required for the catabolism of sialic acids. The protein is HTH-type transcriptional repressor NanR of Citrobacter rodentium (strain ICC168) (Citrobacter freundii biotype 4280).